The following is a 251-amino-acid chain: uncharacterized protein (251 aa).

The next 7 membrane-spanning stretches (helical) occupy residues W48–I68, V88–N108, I110–V130, A132–F152, I158–V178, I184–L204, and G209–L229.

This sequence to M.tuberculosis Rv1337.

It is found in the cell membrane. This is an uncharacterized protein from Mycobacterium leprae (strain TN).